A 279-amino-acid chain; its full sequence is MALSSALIKIFITFLFLQNHVNSQYSSPSKPQPSLGSTISFSITKFDDESPNIFVKGDASISNGVLSLTKTDKYSGKPLQKSVGRATHLTPIHIWDETSGELADFSTSFSFIVNTNGSRLHGDGFTFFLGPLHFDLPKNSSGGYLGLFNPETALIPSQNPIVAIEFDSFTNGWDPASPSQYPHIGIDVGSIDSRATVNWPLDFVQTNALGEASINYNSESKRLSVFVAYPGSGKNATGVSFVVDLRSVLPEWVRVGFSAATGELVETHDIINWSFEAAL.

An N-terminal signal peptide occupies residues 1 to 23; the sequence is MALSSALIKIFITFLFLQNHVNS. 4 N-linked (GlcNAc...) asparagine glycosylation sites follow: Asn-116, Asn-139, Asn-235, and Asn-272.

This sequence belongs to the leguminous lectin family.

In terms of biological role, may be involved in arbuscular mycorrhizal (AM) symbiosis with AM fungi. The protein is Lectin 9 of Medicago truncatula (Barrel medic).